Consider the following 126-residue polypeptide: Large ribosomal subunit protein bL17 (126 aa).

The protein belongs to the bacterial ribosomal protein bL17 family. Part of the 50S ribosomal subunit. Contacts protein L32.

This is Large ribosomal subunit protein bL17 from Magnetococcus marinus (strain ATCC BAA-1437 / JCM 17883 / MC-1).